Consider the following 117-residue polypeptide: Iron-sulfur cluster insertion protein ErpA (117 aa).

Cys-45, Cys-109, and Cys-111 together coordinate iron-sulfur cluster.

This sequence belongs to the HesB/IscA family. In terms of assembly, homodimer. It depends on iron-sulfur cluster as a cofactor.

Its function is as follows. Required for insertion of 4Fe-4S clusters for at least IspG. In Saccharophagus degradans (strain 2-40 / ATCC 43961 / DSM 17024), this protein is Iron-sulfur cluster insertion protein ErpA.